Here is a 309-residue protein sequence, read N- to C-terminus: Probable pyridoxal 5'-phosphate synthase subunit PDX1 (309 aa).

A D-ribose 5-phosphate-binding site is contributed by Asp40. Lys97 functions as the Schiff-base intermediate with D-ribose 5-phosphate in the catalytic mechanism. Gly169 is a binding site for D-ribose 5-phosphate. Arg181 lines the D-glyceraldehyde 3-phosphate pocket. Residues Gly230 and 251 to 252 (GS) contribute to the D-ribose 5-phosphate site.

The protein belongs to the PdxS/SNZ family.

The catalysed reaction is aldehydo-D-ribose 5-phosphate + D-glyceraldehyde 3-phosphate + L-glutamine = pyridoxal 5'-phosphate + L-glutamate + phosphate + 3 H2O + H(+). The protein operates within cofactor biosynthesis; pyridoxal 5'-phosphate biosynthesis. Catalyzes the formation of pyridoxal 5'-phosphate from ribose 5-phosphate (RBP), glyceraldehyde 3-phosphate (G3P) and ammonia. The ammonia is provided by PDX2. Can also use ribulose 5-phosphate and dihydroxyacetone phosphate as substrates, resulting from enzyme-catalyzed isomerization of RBP and G3P, respectively. Also plays an indirect role in resistance to singlet oxygen-generating photosensitizers. This chain is Probable pyridoxal 5'-phosphate synthase subunit PDX1 (PDX1), found in Hevea brasiliensis (Para rubber tree).